Here is a 217-residue protein sequence, read N- to C-terminus: Adenylate kinase (217 aa).

Residue 10–15 (GAGKGT) coordinates ATP. The interval 30 to 59 (STGDMFRAAMKEGTPLGLQAKQYMDRGDLV) is NMP. Residues T31, R36, 57–59 (DLV), 85–88 (GFPR), and Q92 each bind AMP. Residues 126 to 163 (GRRICRNCGATYHLIFHPPAKPGVCDKCGGELYQRADD) form an LID region. R127 contributes to the ATP binding site. C130 and C133 together coordinate Zn(2+). Position 136 to 137 (136 to 137 (TY)) interacts with ATP. Zn(2+) is bound by residues C150 and C153. The AMP site is built by R160 and R171. Q199 provides a ligand contact to ATP.

The protein belongs to the adenylate kinase family. In terms of assembly, monomer.

Its subcellular location is the cytoplasm. It carries out the reaction AMP + ATP = 2 ADP. It functions in the pathway purine metabolism; AMP biosynthesis via salvage pathway; AMP from ADP: step 1/1. In terms of biological role, catalyzes the reversible transfer of the terminal phosphate group between ATP and AMP. Plays an important role in cellular energy homeostasis and in adenine nucleotide metabolism. The polypeptide is Adenylate kinase (Geobacillus stearothermophilus (Bacillus stearothermophilus)).